A 433-amino-acid chain; its full sequence is MSLAPSDVIFAPASGVGGAISLLRLSGAGVARVIGALAGSLPAPRRASLRSFRDGRRGIIDRGLLLWFPGPASVTGEDYAEFHLHGGRAVRAAITAALLDLGARPAEPGEFSRRAFLNSRLDLLEAEGIADLIDAETEAQRQLALDLAGGAMSRAVAAWREALIGLMAQLAALIDFADEDLPAEVEAAMLASMARLRDEIVAAIGAGLAAERLREGVEIVVLGAPNAGKSTLVNALAGEEVAIVSDIPGTTRDAIGVRLDLGGVPVRLVDTAGLRRSDDAIEAEGVRRAEAHARRADLLILCGAAPDFVVPDAPADVPALRIATKADLGGAVPAAMLAVSARTGAGLADLLAALRARVEALVERGAGPALPRPRQIACLRDVAAALDRALAIDVPELRAEEMQAAAVALARLTGTIGVEDVLDQVFSSFCIGK.

Arginine 24, glutamate 81, and arginine 120 together coordinate (6S)-5-formyl-5,6,7,8-tetrahydrofolate. Residues glycine 216–glutamate 359 enclose the TrmE-type G domain. Residue asparagine 226 participates in K(+) binding. Residues asparagine 226–threonine 231, serine 245–threonine 251, aspartate 270–glycine 273, and serine 340–arginine 342 each bind GTP. Serine 230 is a Mg(2+) binding site. Serine 245, isoleucine 247, and threonine 250 together coordinate K(+). A Mg(2+)-binding site is contributed by threonine 251. Lysine 433 contacts (6S)-5-formyl-5,6,7,8-tetrahydrofolate.

The protein belongs to the TRAFAC class TrmE-Era-EngA-EngB-Septin-like GTPase superfamily. TrmE GTPase family. Homodimer. Heterotetramer of two MnmE and two MnmG subunits. Requires K(+) as cofactor.

It localises to the cytoplasm. Exhibits a very high intrinsic GTPase hydrolysis rate. Involved in the addition of a carboxymethylaminomethyl (cmnm) group at the wobble position (U34) of certain tRNAs, forming tRNA-cmnm(5)s(2)U34. In Acidiphilium cryptum (strain JF-5), this protein is tRNA modification GTPase MnmE.